The chain runs to 221 residues: Glutathione S-transferase Z1 (221 aa).

In terms of domain architecture, GST N-terminal spans 7–88 (EKLKLYSYWR…YLDEKYPEPP (82 aa)). Residues 17–18 (SS), 17–22 (SSCAHR), Q46, 46–47 (QF), 59–60 (TV), V60, 72–73 (DS), Q112, and 116–118 (NLA) contribute to the glutathione site. Residues 93–218 (DLHKRAVNYQ…LPEKQPDAPS (126 aa)) form the GST C-terminal domain.

This sequence belongs to the GST superfamily. Zeta family. In terms of assembly, homodimer.

Its subcellular location is the cytoplasm. The protein resides in the cytosol. The catalysed reaction is RX + glutathione = an S-substituted glutathione + a halide anion + H(+). Its function is as follows. Acts a maleylacetone isomerase. Also catalyzes the glutathione-dependent dehalogenation of dichloroacetic acid to glyoxylic acid. In vitro, possesses glutathione peroxidase activity toward cumene hydroperoxide and linoleic acid-13-hydroperoxide. This Arabidopsis thaliana (Mouse-ear cress) protein is Glutathione S-transferase Z1 (GSTZ1).